We begin with the raw amino-acid sequence, 82 residues long: MQPLQISAIVALVVAAIIAIVVWSIALLEYRKLLRQRKIDRLIDRIRERAEDSGNESEGDQEELSALVEMGGHDAPWDIDDL.

Topologically, residues 1–7 (MQPLQIS) are extracellular. Residues 8–28 (AIVALVVAAIIAIVVWSIALL) form a helical membrane-spanning segment. Residues 29 to 82 (EYRKLLRQRKIDRLIDRIRERAEDSGNESEGDQEELSALVEMGGHDAPWDIDDL) are Cytoplasmic-facing. Phosphoserine; by host CK2 is present on residues S53 and S57.

It belongs to the HIV-1 VPU protein family. In terms of assembly, homopentamer. Interacts with host CD4 and BRTC; these interactions induce proteasomal degradation of CD4. Interacts with host BST2; this interaction leads to the degradation of host BST2. Interacts with host FBXW11. Interacts with host AP1M1; this interaction plays a role in the mistrafficking and subsequent degradation of host BST2. Interacts with host RANBP2; this interaction allows Vpu to down-regulate host BLM sumoylation. Phosphorylated by host CK2. This phosphorylation is necessary for interaction with human BTRC and degradation of CD4.

The protein resides in the host membrane. Ion channel activity is inhibited by hexamethylene amiloride in vitro. Enhances virion budding by targeting host CD4 and Tetherin/BST2 to proteasome degradation. Degradation of CD4 prevents any unwanted premature interactions between viral Env and its host receptor CD4 in the endoplasmic reticulum. Degradation of antiretroviral protein Tetherin/BST2 is important for virion budding, as BST2 tethers new viral particles to the host cell membrane. Mechanistically, Vpu bridges either CD4 or BST2 to BTRC, a substrate recognition subunit of the Skp1/Cullin/F-box protein E3 ubiquitin ligase, induces their ubiquitination and subsequent proteasomal degradation. The alteration of the E3 ligase specificity by Vpu seems to promote the degradation of host IKBKB, leading to NF-kappa-B down-regulation and subsequent apoptosis. Acts as a viroporin that forms an oligomeric ion channel in membranes. Modulates the host DNA repair mechanisms to promote degradation of nuclear viral cDNA in cells that are already productively infected in order to suppress immune sensing and proviral hyper-integration (superinfection). Manipulates PML-NBs and modulates SUMOylation of host BLM protein thereby enhancing its DNA-end processing activity toward viral unintegrated linear DNA. Also inhibits RAD52-mediated homologous repair of viral cDNA, preventing the generation of dead-end circular forms of single copies of the long terminal repeat and permitting sustained nucleolytic attack. This is Protein Vpu from Homo sapiens (Human).